We begin with the raw amino-acid sequence, 319 residues long: Tryptophan--tRNA ligase (319 aa).

Residues 8 to 10 (QPS) and 16 to 17 (GN) contribute to the ATP site. The short motif at 9 to 17 (PSGDLHIGN) is the 'HIGH' region element. L-tryptophan is bound at residue Asp-131. ATP is bound by residues 143-145 (GKD), Val-182, and 189-193 (KMSKS). Positions 189–193 (KMSKS) match the 'KMSKS' region motif.

Belongs to the class-I aminoacyl-tRNA synthetase family. In terms of assembly, homodimer.

It localises to the cytoplasm. It carries out the reaction tRNA(Trp) + L-tryptophan + ATP = L-tryptophyl-tRNA(Trp) + AMP + diphosphate + H(+). Catalyzes the attachment of tryptophan to tRNA(Trp). The polypeptide is Tryptophan--tRNA ligase (Campylobacter jejuni subsp. jejuni serotype O:2 (strain ATCC 700819 / NCTC 11168)).